The chain runs to 493 residues: Glycerol kinase (493 aa).

Thr13 is a binding site for ADP. Residues Thr13, Thr14, and Ser15 each coordinate ATP. Thr13 provides a ligand contact to sn-glycerol 3-phosphate. Arg17 is a binding site for ADP. The sn-glycerol 3-phosphate site is built by Arg83, Glu84, Tyr135, and Asp244. Residues Arg83, Glu84, Tyr135, Asp244, and Gln245 each contribute to the glycerol site. ADP is bound by residues Thr266 and Gly309. Positions 266, 309, 313, and 410 each coordinate ATP. ADP contacts are provided by Gly410 and Asn414.

This sequence belongs to the FGGY kinase family.

It catalyses the reaction glycerol + ATP = sn-glycerol 3-phosphate + ADP + H(+). The protein operates within polyol metabolism; glycerol degradation via glycerol kinase pathway; sn-glycerol 3-phosphate from glycerol: step 1/1. Inhibited by fructose 1,6-bisphosphate (FBP). Key enzyme in the regulation of glycerol uptake and metabolism. Catalyzes the phosphorylation of glycerol to yield sn-glycerol 3-phosphate. This is Glycerol kinase from Shewanella pealeana (strain ATCC 700345 / ANG-SQ1).